The sequence spans 116 residues: Large ribosomal subunit protein bL17 (116 aa).

The protein belongs to the bacterial ribosomal protein bL17 family. As to quaternary structure, part of the 50S ribosomal subunit. Contacts protein L32.

The chain is Large ribosomal subunit protein bL17 from Wolinella succinogenes (strain ATCC 29543 / DSM 1740 / CCUG 13145 / JCM 31913 / LMG 7466 / NCTC 11488 / FDC 602W) (Vibrio succinogenes).